A 267-amino-acid polypeptide reads, in one-letter code: Integral membrane protein 2C (267 aa).

At Thr37 the chain carries Phosphothreonine. A helical; Signal-anchor for type II membrane protein transmembrane segment spans residues 55-75 (VGGVCYLSMGMVVLLMGLVFA). The BRICHOS domain maps to 136–230 (FGGGDPADII…LCNGKDTYRL (95 aa)). An intrachain disulfide couples Cys163 to Cys222. Asn169 carries an N-linked (GlcNAc...) asparagine glycan.

The protein belongs to the ITM2 family. Interacts with BACE1. Interacts with APP. Interacts with STMN2. In terms of processing, type I membrane-bound, as well as soluble, furin has a pre-eminent role in ITM2C proteolytic processing. PCSK7 and PCSK5 may also be involved although to a lesser extent. The soluble form of PCSK7 is incapable of processing ITM2C. Fails to undergo shedding by ADAM10 and intramembrane cleavage by SPPL2B.

It localises to the lysosome membrane. The protein localises to the cell membrane. Negative regulator of amyloid-beta peptide production. May inhibit the processing of APP by blocking its access to alpha- and beta-secretase. Binding to the beta-secretase-cleaved APP C-terminal fragment is negligible, suggesting that ITM2C is a poor gamma-secretase cleavage inhibitor. May play a role in TNF-induced cell death and neuronal differentiation. This Pongo abelii (Sumatran orangutan) protein is Integral membrane protein 2C (ITM2C).